Here is a 282-residue protein sequence, read N- to C-terminus: MRGMKLLGALLALAALLQGAVSLKIAAFNIQTFGETKMSNATLVSYIVQILSRYDIALVQEVRDSHLTAVGKLLDNLNQDAPDTYHYVVSEPLGRNSYKERYLFVYRPDQVSAVDSYYYDDGCEPCGNDTFNREPAIVRFFSRFTEVREFAIVPLHAAPGDAVAEIDALYDVYLDVQEKWGLEDVMLMGDFNAGCSYVRPSQWSSIRLWTSPTFQWLIPDSADTTATPTHCAYDRIVVAGMLLRGAVVPDSALPFNFQAAYGLSDQLAQAISDHYPVEVMLK.

The N-terminal stretch at 1 to 22 (MRGMKLLGALLALAALLQGAVS) is a signal peptide. N-linked (GlcNAc...) asparagine glycosylation occurs at Asn-40. Residue Glu-100 is part of the active site. Cys-123 and Cys-126 are oxidised to a cystine. Asn-128 carries N-linked (GlcNAc...) asparagine glycosylation. Residue His-156 is part of the active site. Cys-195 and Cys-231 are disulfide-bonded.

This sequence belongs to the DNase I family. Ca(2+) serves as cofactor. Requires Mg(2+) as cofactor. Principally in tissues of the digestive system. Highest levels found in urine, but also relatively abundant in semen and saliva.

It localises to the secreted. The protein localises to the zymogen granule. Its subcellular location is the nucleus envelope. It carries out the reaction Endonucleolytic cleavage to 5'-phosphodinucleotide and 5'-phosphooligonucleotide end-products.. Its function is as follows. Serum endocuclease secreted into body fluids by a wide variety of exocrine and endocrine organs. Expressed by non-hematopoietic tissues and preferentially cleaves protein-free DNA. Among other functions, seems to be involved in cell death by apoptosis. Binds specifically to G-actin and blocks actin polymerization. Together with DNASE1L3, plays a key role in degrading neutrophil extracellular traps (NETs). NETs are mainly composed of DNA fibers and are released by neutrophils to bind pathogens during inflammation. Degradation of intravascular NETs by DNASE1 and DNASE1L3 is required to prevent formation of clots that obstruct blood vessels and cause organ damage following inflammation. The chain is Deoxyribonuclease-1 from Homo sapiens (Human).